The chain runs to 348 residues: tRNA pseudouridine synthase D (348 aa).

The active-site Nucleophile is the Asp78. The region spanning 150–304 (GLPNFFGPQR…AEGTRRAARL (155 aa)) is the TRUD domain.

It belongs to the pseudouridine synthase TruD family.

It catalyses the reaction uridine(13) in tRNA = pseudouridine(13) in tRNA. Functionally, responsible for synthesis of pseudouridine from uracil-13 in transfer RNAs. The polypeptide is tRNA pseudouridine synthase D (Anaeromyxobacter dehalogenans (strain 2CP-1 / ATCC BAA-258)).